We begin with the raw amino-acid sequence, 1169 residues long: Zinc finger protein 862 (1169 aa).

Positions 11-77 constitute a KRAB 1 domain; it reads VTFDDITVYL…SVQGQRSLLE (67 aa). The TTF-type 1 zinc-finger motif lies at 135 to 218; that stretch reads KPRSIQKSWF…RDPIWAARFR (84 aa). The region spanning 333 to 404 is the KRAB 2 domain; it reads VVFEDVAVYF…DPNGPKWGKG (72 aa). A TTF-type 2 zinc finger spans residues 461-544; that stretch reads RPRSIQRSWF…KEDTPHTALV (84 aa).

It localises to the nucleus. In terms of biological role, may be involved in transcriptional regulation. The protein is Zinc finger protein 862 (ZNF862) of Homo sapiens (Human).